Consider the following 168-residue polypeptide: Protein OPG162 (168 aa).

Topologically, residues 1 to 14 (MKSLNRQTVSRFKK) are intravirion. The chain crosses the membrane as a helical span at residues 15-37 (LSVPAAIMMILSTIISGIGTFLH). The Virion surface portion of the chain corresponds to 38-168 (YKEELMPSAC…SVLCVKKFYK (131 aa)). Residues 54 to 163 (YDKHCYLDTN…CKSTQSVLCV (110 aa)) form the C-type lectin domain. Intrachain disulfides connect Cys-75–Cys-162 and Cys-141–Cys-154. N-linked (GlcNAc...) asparagine; by host glycosylation occurs at Asn-133.

Belongs to the orthopoxvirus OPG162 protein family. In terms of assembly, interacts with protein OPG161. Interacts with protein OPG164. Interacts with protein OPG190.

It is found in the virion membrane. Its subcellular location is the host Golgi apparatus. Functionally, forms a complex with OPG162 and OPG190 to coordinate the incorporation of OPG164 into wrapped enveloped virion (EV) membranes and, subsequently, the production of actin tails. Therefore plays an essential role in efficient cell-to-cell spread of viral particles. The protein is Protein OPG162 (OPG162) of Vaccinia virus (strain Western Reserve) (VACV).